A 371-amino-acid polypeptide reads, in one-letter code: Partitioning defective 6 homolog beta (371 aa).

2 positions are modified to phosphoserine: Ser-10 and Ser-11. One can recognise a PB1 domain in the interval 16–96; sequence TMEVKSKFGA…PLLRIFIQKK (81 aa). The tract at residues 126–253 is interaction with PARD3 and CDC42; the sequence is RKKPHIVISM…ITVRPANQRN (128 aa). The region spanning 133-150 is the Pseudo-CRIB domain; sequence ISMPQDFRPVSSIIDVDI. The PDZ domain occupies 157–250; the sequence is RVRLYKYGTE…NLIITVRPAN (94 aa). 2 disordered regions span residues 253–273 and 326–371; these read NNVV…DNSL and FESG…IITL. The span at 326–340 shows a compositional bias: polar residues; the sequence is FESGQNGFSPPQDTS. Residues 352 to 363 are compositionally biased toward basic and acidic residues; sequence LESRAPDQKLLE.

This sequence belongs to the PAR6 family. In terms of assembly, interacts with PARD3. Interacts with GTP-bound forms of CDC42, RHOQ/TC10 and RAC1. Interacts with the N-terminal part of PRKCI and PRKCZ. Part of a complex with PARD3, CDC42 or RAC1 and PRKCI or PRKCZ. Part of a complex with LLGL1 and PRKCI. Interacts with ALS2CR19. Interacts with ECT2. Interacts with PALS1. In terms of tissue distribution, expressed in pancreas and in both adult and fetal kidney. Weakly expressed in placenta and lung. Not expressed in other tissues.

Its subcellular location is the cytoplasm. It localises to the cell membrane. It is found in the cell junction. The protein resides in the tight junction. In terms of biological role, adapter protein involved in asymmetrical cell division and cell polarization processes. Probably involved in formation of epithelial tight junctions. Association with PARD3 may prevent the interaction of PARD3 with F11R/JAM1, thereby preventing tight junction assembly. The PARD6-PARD3 complex links GTP-bound Rho small GTPases to atypical protein kinase C proteins. This is Partitioning defective 6 homolog beta (Pard6b) from Mus musculus (Mouse).